Here is a 466-residue protein sequence, read N- to C-terminus: Cell division protein FtsP (466 aa).

The tat-type signal signal peptide spans 1–28 (MNYSRRSLFKKTLIATALSALPATLLAA).

This sequence belongs to the FtsP family. Post-translationally, predicted to be exported by the Tat system. The position of the signal peptide cleavage has not been experimentally proven.

It localises to the periplasm. Cell division protein that is required for growth during stress conditions. May be involved in protecting or stabilizing the divisomal assembly under conditions of stress. The chain is Cell division protein FtsP from Actinobacillus succinogenes (strain ATCC 55618 / DSM 22257 / CCUG 43843 / 130Z).